The sequence spans 81 residues: Exodeoxyribonuclease 7 small subunit (81 aa).

Residues 60–70 show a composition bias toward basic and acidic residues; sequence LVDKDGNEKAL. A disordered region spans residues 60 to 81; it reads LVDKDGNEKALDPQNASAPEEE.

It belongs to the XseB family. As to quaternary structure, heterooligomer composed of large and small subunits.

It localises to the cytoplasm. The enzyme catalyses Exonucleolytic cleavage in either 5'- to 3'- or 3'- to 5'-direction to yield nucleoside 5'-phosphates.. Bidirectionally degrades single-stranded DNA into large acid-insoluble oligonucleotides, which are then degraded further into small acid-soluble oligonucleotides. The chain is Exodeoxyribonuclease 7 small subunit from Lactobacillus johnsonii (strain CNCM I-12250 / La1 / NCC 533).